Here is a 657-residue protein sequence, read N- to C-terminus: Polycomb protein suz12-A (657 aa).

The interval 335-363 (TAPVAKPLATRNSESSTVDSSKTSNIKPP) is disordered. A compositionally biased stretch (low complexity) spans 347–358 (SESSTVDSSKTS). Residues 413 to 436 (LHCPWCTLNCRKLYSLLKHLKLSH) form a C2H2-type zinc finger. Positions 528–604 (RLYFHSDSCT…NQMNQACMSF (77 aa)) are VEFS-box.

The protein belongs to the VEFS (VRN2-EMF2-FIS2-SU(Z)12) family. As to quaternary structure, component of the prc2/eed-ezh2 complex.

It is found in the nucleus. Functionally, polycomb group (PcG) protein. Component of the prc2/eed-ezh2 complex, which methylates 'Lys-9' and 'Lys-27' of histone H3, leading to transcriptional repression of the affected target gene. The polypeptide is Polycomb protein suz12-A (suz12a) (Danio rerio (Zebrafish)).